We begin with the raw amino-acid sequence, 190 residues long: MLDREGYRPNVGIILVNGKNEVFWGKRIREHAWQFPQGGIKYGESPVQAMYRELHEEVGLKPEHVRILGRTRDWLRYNVPDHFVRREWRGHYKGQKQIWFLLRLVGRDSDVCLRATQHPEFDAWRWSQYWVPLDAVIEFKRDVYTQALNELAVILFRRHHETRYLRQRVHGPRSTDSPSSETDGHAHIAG.

The Nudix hydrolase domain maps to 6 to 149; that stretch reads GYRPNVGIIL…KRDVYTQALN (144 aa). The Nudix box motif lies at 38–59; that stretch reads GGIKYGESPVQAMYRELHEEVG. Positions 167–190 are disordered; that stretch reads QRVHGPRSTDSPSSETDGHAHIAG.

Belongs to the Nudix hydrolase family. RppH subfamily. A divalent metal cation serves as cofactor.

Accelerates the degradation of transcripts by removing pyrophosphate from the 5'-end of triphosphorylated RNA, leading to a more labile monophosphorylated state that can stimulate subsequent ribonuclease cleavage. This Bordetella pertussis (strain Tohama I / ATCC BAA-589 / NCTC 13251) protein is RNA pyrophosphohydrolase.